Reading from the N-terminus, the 243-residue chain is Uridylate kinase (243 aa).

Residue 14–17 (KLSG) participates in ATP binding. Residue glycine 57 participates in UMP binding. Positions 58 and 62 each coordinate ATP. UMP-binding positions include aspartate 77 and 139 to 146 (TGRPYFTT). Residues asparagine 167, tyrosine 173, and aspartate 176 each contribute to the ATP site.

It belongs to the UMP kinase family. In terms of assembly, homohexamer.

Its subcellular location is the cytoplasm. It carries out the reaction UMP + ATP = UDP + ADP. It participates in pyrimidine metabolism; CTP biosynthesis via de novo pathway; UDP from UMP (UMPK route): step 1/1. Its activity is regulated as follows. Inhibited by UTP. Its function is as follows. Catalyzes the reversible phosphorylation of UMP to UDP. The polypeptide is Uridylate kinase (Mycoplasmopsis pulmonis (strain UAB CTIP) (Mycoplasma pulmonis)).